The primary structure comprises 704 residues: Zinc finger protein MSN2 (704 aa).

Positions 84–246 (PSTTDNSLHL…SISNSNSNST (163 aa)) are disordered. The segment covering 91–112 (LHLKADSNKNRDARTIENDSEI) has biased composition (basic and acidic residues). Positions 113–133 (KSTNNASGSGANQYTTLTSPY) are enriched in polar residues. Residues 141–166 (NMNNPLQSPSPSSVPQNPTINPPINT) show a composition bias toward low complexity. Composition is skewed to polar residues over residues 167 to 193 (ASNE…QQHT) and 204 to 220 (NGAN…NNLN). Positions 228 to 246 (NSDTNSYSNSISNSNSNST) are enriched in low complexity. Residues 261 to 269 (SMLDDYVSS) carry the 9aaTAD motif. Phosphoserine is present on residues serine 288 and serine 304. The interval 418–437 (NRVQHKQLTSSHNNSSTNMK) is disordered. The segment covering 426 to 437 (TSSHNNSSTNMK) has biased composition (polar residues). Phosphoserine occurs at positions 451 and 582. The tract at residues 592–634 (LTNQQNNISSSSVNSTGNGAGVTKERRPSYRRKSMTPSRRSSV) is disordered. The span at 593-608 (TNQQNNISSSSVNSTG) shows a compositional bias: low complexity. The residue at position 633 (serine 633) is a Phosphoserine. 2 consecutive C2H2-type zinc fingers follow at residues 647-665 (FHCH…LKRH) and 676-698 (FACH…IKTH).

As to quaternary structure, interacts with WHI2.

The protein localises to the cytoplasm. The protein resides in the nucleus. Its function is as follows. Positive transcriptional factor that acts as a component of the stress responsive system. Recognizes and binds to the stress response element (STRE) which is involved in the response to various forms of stress (heat, oxidative, osmotic, etc.). Involved in the regulation of the CTT1, DDR2, HSP12 genes. May be regulated via WHI2-PSR1 complex phosphatase activity. The polypeptide is Zinc finger protein MSN2 (MSN2) (Saccharomyces cerevisiae (strain ATCC 204508 / S288c) (Baker's yeast)).